Consider the following 820-residue polypeptide: Sodium/hydrogen exchanger 1 (820 aa).

Residues 1–102 (MMLRWSGIWG…FPVLDIDYLH (102 aa)) lie on the Extracellular side of the membrane. Positions 44-71 (ASTIRGSEPPRERSIGDVTTAPSEPLHH) are disordered. The helical transmembrane segment at 103 to 125 (VRTPFEISLWILLACLMKIGFHV) threads the bilayer. Residues 126 to 134 (IPTISSIVP) are Cytoplasmic-facing. Residues 135 to 152 (ESCLLIVVGLLVGGLIKG) form a helical membrane-spanning segment. Topologically, residues 153–162 (VGETPPFLQS) are extracellular. The chain crosses the membrane as a helical span at residues 163–180 (DVFFLFLLPPIILDAGYF). At 181 to 190 (LPLRQFTENL) the chain is on the cytoplasmic side. A helical transmembrane segment spans residues 191–219 (GTILIFAVVGTLWNAFFLGGLLYAVCLVG). Over 220–226 (GEQINNI) the chain is Extracellular. The helical transmembrane segment at 227–253 (GLLDTLLFGSIISAVDPVAVLAVFEEI) threads the bilayer. Topologically, residues 254 to 256 (HIN) are cytoplasmic. A helical membrane pass occupies residues 257-287 (ELLHILVFGESLLNDAVTVVLYHLFEEFASY). Residues 288–291 (EYVG) are Extracellular-facing. The helical transmembrane segment at 292 to 326 (ISDIFLGFLSFFVVSLGGVFVGVVYGVIAAFTSRF) threads the bilayer. The Cytoplasmic portion of the chain corresponds to 327 to 332 (TSHIRV). Residues 333-345 (IEPLFVFLYSYMA) form a helical membrane-spanning segment. Over 346–354 (YLSAELFHL) the chain is Extracellular. The chain crosses the membrane as a helical span at residues 355–375 (SGIMALIASGVVMRPYVEANI). Over 376–377 (SH) the chain is Cytoplasmic. The helical transmembrane segment at 378–408 (KSHTTIKYFLKMWSSVSETLIFIFLGVSTVA) threads the bilayer. The Extracellular portion of the chain corresponds to 409–414 (GSHQWN). A helical transmembrane segment spans residues 415-442 (WTFVISTLLFCLIARVLGVLVLTWFINK). Residues 443-448 (FRIVKL) lie on the Cytoplasmic side of the membrane. Residues 449–473 (TPKDQFIIAYGGLRGAIAFSLGYLL) form a helical membrane-spanning segment. Residues 474–479 (DKKHFP) lie on the Extracellular side of the membrane. A helical membrane pass occupies residues 480–509 (MCDLFLTAIITVIFFTVFVQGMTIRPLVDL). The interval 505 to 571 (PLVDLLAVKK…VKKCLIAGER (67 aa)) is interaction with TESC. Topologically, residues 510–820 (LAVKKKQETK…EGEPFIPKGQ (311 aa)) are cytoplasmic. The PI(4,5)P2-binding region stretch occupies residues 513–520 (KKKQETKR). The tract at residues 519 to 549 (KRSINEEIHTQFLDHLLTGIEDICGHYGHHH) is interaction with CHP2. The segment at 544-549 (HYGHHH) is confers pH-dependent PI(4,5)P2 binding. Positions 556–564 (RFNKKYVKK) are PI(4,5)P2-binding region. A phosphoserine mark is found at serine 603 and serine 606. Residue threonine 607 is modified to Phosphothreonine. Phosphoserine occurs at positions 609 and 652. Residues 637 to 820 (KILRSNLQKT…EGEPFIPKGQ (184 aa)) form an interaction with TESC region. Positions 637–820 (KILRSNLQKT…EGEPFIPKGQ (184 aa)) are interaction with CALM1. The tract at residues 688-691 (LTVP) is interaction with PPP3CA. Phosphoserine occurs at positions 697, 701, and 707. The interaction with PPP3CA stretch occupies residues 719–724 (PVITID). Residues serine 727, serine 730, and serine 733 each carry the phosphoserine modification. The tract at residues 747 to 820 (GLKRGPRTTP…EGEPFIPKGQ (74 aa)) is disordered. 2 positions are modified to phosphothreonine: threonine 755 and threonine 784. Serine 790 and serine 801 each carry phosphoserine.

The protein belongs to the monovalent cation:proton antiporter 1 (CPA1) transporter (TC 2.A.36) family. In terms of assembly, homodimer; dimerization is crucial for its function. Oligomer. Interacts with CALM1 in a calcium-dependent manner. Interacts with TESC. Interacts (via residues 504-563) with CHP1. The interaction with CHP1 occurs at the plasma membrane in a calcium-dependent manner. Interacts with CHP2. The interaction with CHP2 occurs in a calcium-dependent manner. Interacts with EZR; regulates the cytoskeletal interactions of SLC9A1 and promotes stress fiber formation. Post-translationally, N-glycosylated and O-glycosylated in the N-terminal region. In terms of processing, ubiquitinated, leading to its degradation by the proteasome. Ubiquitination is reduced by CHP1. Palmitoylated; may play a major role in SLC9A1 regulation. Post-translationally, phosphorylation at Thr-784 increases SLC9A1 activity; specifically dephosphorylated by PPP3CA. Specifically dephosphorylated at Thr-784 by PPP3CA that negatively regulates SLC9A1 activity. Phosphorylation at Ser-652 by AKT1 reduces SLC9A1 binding to CALM1. Widely expressed.

It localises to the cell membrane. Its subcellular location is the basolateral cell membrane. The enzyme catalyses Na(+)(in) + H(+)(out) = Na(+)(out) + H(+)(in). It carries out the reaction Li(+)(out) + H(+)(in) = Li(+)(in) + H(+)(out). It catalyses the reaction Li(+)(in) + Na(+)(out) = Li(+)(out) + Na(+)(in). Activated at acidic pHs. Inhibited by cariporide and eniporide. Inhibited by amiloride and 5-amino-substituted derivatives. Phosphatidylinositol 4,5-bisphosphate (PI(4,5)P2) bind and activates SLC9A1 transporter activity. Its function is as follows. Electroneutral Na(+) /H(+) antiporter that extrudes Na(+) in exchange for external protons driven by the inward sodium ion chemical gradient, protecting cells from acidification that occurs from metabolism. Exchanges intracellular H(+) ions for extracellular Na(+) in 1:1 stoichiometry. Plays a key role in maintening intracellular pH neutral and cell volume, and thus is important for cell growth, proliferation, migration and survival. In addition, can transport lithium Li(+) and also functions as a Na(+)/Li(+) antiporter. SLC9A1 also functions in membrane anchoring and organization of scaffolding complexes that coordinate signaling inputs. This is Sodium/hydrogen exchanger 1 (Slc9a1) from Rattus norvegicus (Rat).